We begin with the raw amino-acid sequence, 337 residues long: GTPase Obg (337 aa).

The 159-residue stretch at 1–159 (MKFVDSASIF…LMLNMELKLM (159 aa)) folds into the Obg domain. The OBG-type G domain maps to 160–323 (ADVGLVGFPN…LKDELWREVS (164 aa)). GTP-binding positions include 166-173 (GFPNAGKS), 191-195 (FTTLV), 213-216 (DIPG), 280-283 (TKMD), and 304-306 (SAV). Mg(2+)-binding residues include S173 and T193.

This sequence belongs to the TRAFAC class OBG-HflX-like GTPase superfamily. OBG GTPase family. In terms of assembly, monomer. Mg(2+) serves as cofactor.

It is found in the cytoplasm. An essential GTPase which binds GTP, GDP and possibly (p)ppGpp with moderate affinity, with high nucleotide exchange rates and a fairly low GTP hydrolysis rate. Plays a role in control of the cell cycle, stress response, ribosome biogenesis and in those bacteria that undergo differentiation, in morphogenesis control. This chain is GTPase Obg, found in Pelodictyon phaeoclathratiforme (strain DSM 5477 / BU-1).